The chain runs to 176 residues: Large ribosomal subunit protein uL10 (176 aa).

This sequence belongs to the universal ribosomal protein uL10 family. As to quaternary structure, part of the ribosomal stalk of the 50S ribosomal subunit. The N-terminus interacts with L11 and the large rRNA to form the base of the stalk. The C-terminus forms an elongated spine to which L12 dimers bind in a sequential fashion forming a multimeric L10(L12)X complex.

Forms part of the ribosomal stalk, playing a central role in the interaction of the ribosome with GTP-bound translation factors. The sequence is that of Large ribosomal subunit protein uL10 from Thioalkalivibrio sulfidiphilus (strain HL-EbGR7).